We begin with the raw amino-acid sequence, 248 residues long: Mannose-binding protein C (248 aa).

Positions 1 to 20 are cleaved as a signal peptide; that stretch reads MSLFPSLTLLLLSVVATSYS. Residues 42 to 99 form the Collagen-like domain; sequence GINGFPGKDGRDGTKGEKGEPGQGLRGLQGPPGKLGPPGNPGSSGSPGPKGQKGDPGE. Residues 43–111 form a disordered region; the sequence is INGFPGKDGR…DCESSLAASE (69 aa). P47 bears the 4-hydroxyproline mark. A compositionally biased stretch (basic and acidic residues) spans 49-61; the sequence is KDGRDGTKGEKGE. Residues P73, P79, P82, and P88 each carry the 4-hydroxyproline modification. Positions 82-91 are enriched in low complexity; that stretch reads PGSSGSPGPK. A coiled-coil region spans residues 112 to 130; it reads RKALQTEMARIKKWLTFSL. One can recognise a C-type lectin domain in the interval 134-245; that stretch reads VGNKFFLTNG…CSSSHLALCE (112 aa). Intrachain disulfides connect C155–C244 and C222–C236.

As to quaternary structure, oligomeric complex of 3 or more homotrimers. Interacts with MASP1 and MASP2. Interacts with MEP1A and MEP1B and may inhibit their catalytic activity. Post-translationally, hydroxylation on proline residues within the sequence motif, GXPG, is most likely to be 4-hydroxy as this fits the requirement for 4-hydroxylation in vertebrates.

It localises to the secreted. In terms of biological role, calcium-dependent lectin involved in innate immune defense. Binds mannose, fucose and N-acetylglucosamine on different microorganisms and activates the lectin complement pathway. Binds to late apoptotic cells, as well as to apoptotic blebs and to necrotic cells, but not to early apoptotic cells, facilitating their uptake by macrophages. This is Mannose-binding protein C (MBL2) from Macaca fascicularis (Crab-eating macaque).